We begin with the raw amino-acid sequence, 460 residues long: Cysteine--tRNA ligase (460 aa).

C28 is a Zn(2+) binding site. The 'HIGH' region signature appears at 30 to 40 (MTVYDYCHLGH). The Zn(2+) site is built by C209, H234, and E238. A 'KMSKS' region motif is present at residues 266-270 (KMSKS). Residue K269 participates in ATP binding.

The protein belongs to the class-I aminoacyl-tRNA synthetase family. Monomer. Requires Zn(2+) as cofactor.

It localises to the cytoplasm. It carries out the reaction tRNA(Cys) + L-cysteine + ATP = L-cysteinyl-tRNA(Cys) + AMP + diphosphate. The protein is Cysteine--tRNA ligase of Pseudomonas putida (strain ATCC 700007 / DSM 6899 / JCM 31910 / BCRC 17059 / LMG 24140 / F1).